The following is a 221-amino-acid chain: Toxin coregulated pilus biosynthesis protein P (221 aa).

The segment at residues 5-109 (RVIYQFPDNL…VKLQGYRINI (105 aa)) is a DNA-binding region (ompR/PhoB-type). A helical transmembrane segment spans residues 143-163 (VVPYLVFSALYVALLPVIWWS).

The protein localises to the cell membrane. Involved in TCP pilus biogenesis. This Vibrio cholerae serotype O1 (strain ATCC 39315 / El Tor Inaba N16961) protein is Toxin coregulated pilus biosynthesis protein P (tcpP).